A 99-amino-acid chain; its full sequence is Small ribosomal subunit protein bS20 (99 aa).

Belongs to the bacterial ribosomal protein bS20 family.

Its function is as follows. Binds directly to 16S ribosomal RNA. This is Small ribosomal subunit protein bS20 from Picosynechococcus sp. (strain ATCC 27264 / PCC 7002 / PR-6) (Agmenellum quadruplicatum).